The following is a 121-amino-acid chain: Basic phospholipase A2 homolog BaTX (121 aa).

7 disulfides stabilise this stretch: Cys-26–Cys-115, Cys-28–Cys-44, Cys-43–Cys-95, Cys-49–Cys-121, Cys-50–Cys-88, Cys-57–Cys-81, and Cys-75–Cys-86. The important for membrane-damaging activities in eukaryotes and bacteria; heparin-binding stretch occupies residues 105 to 117 (KKYRYYLKPLCKK).

Belongs to the phospholipase A2 family. Group II subfamily. K49 sub-subfamily. As to quaternary structure, homodimer; non-covalently linked. In terms of tissue distribution, expressed by the venom gland.

It is found in the secreted. Snake venom phospholipase A2 homolog that lacks enzymatic activity. Is myotoxic and displays edema-inducing activities. In vitro, produced time-dependent, irreversible neuromuscular blockade in isolated mouse phrenic nerve-diaphragm and chick biventer cervicis preparations. A model of myotoxic mechanism has been proposed: an apo Lys49-PLA2 is activated by the entrance of a hydrophobic molecule (e.g. fatty acid) at the hydrophobic channel of the protein leading to a reorientation of a monomer. This reorientation causes a transition between 'inactive' to 'active' states, causing alignment of C-terminal and membrane-docking sites (MDoS) side-by-side and putting the membrane-disruption sites (MDiS) in the same plane, exposed to solvent and in a symmetric position for both monomers. The MDoS region stabilizes the toxin on membrane by the interaction of charged residues with phospholipid head groups. Subsequently, the MDiS region destabilizes the membrane with penetration of hydrophobic residues. This insertion causes a disorganization of the membrane, allowing an uncontrolled influx of ions (i.e. calcium and sodium), and eventually triggering irreversible intracellular alterations and cell death. The chain is Basic phospholipase A2 homolog BaTX from Bothrops alternatus (Urutu).